The primary structure comprises 450 residues: tRNA modification GTPase MnmE (450 aa).

(6S)-5-formyl-5,6,7,8-tetrahydrofolate contacts are provided by Arg23, Glu81, and Lys120. The TrmE-type G domain maps to 216–373 (GIHLVLAGKP…LLKKIATLAG (158 aa)). GTP contacts are provided by residues 226–231 (NAGKSS), 245–251 (TPQAGTT), 270–273 (DTAG), and 337–340 (NKAD). Positions 230 and 251 each coordinate Mg(2+). Lys450 contacts (6S)-5-formyl-5,6,7,8-tetrahydrofolate.

It belongs to the TRAFAC class TrmE-Era-EngA-EngB-Septin-like GTPase superfamily. TrmE GTPase family. Homodimer. Heterotetramer of two MnmE and two MnmG subunits. It depends on K(+) as a cofactor.

It localises to the cytoplasm. In terms of biological role, exhibits a very high intrinsic GTPase hydrolysis rate. Involved in the addition of a carboxymethylaminomethyl (cmnm) group at the wobble position (U34) of certain tRNAs, forming tRNA-cmnm(5)s(2)U34. In Dichelobacter nodosus (strain VCS1703A), this protein is tRNA modification GTPase MnmE.